The primary structure comprises 537 residues: Methylmalonate-semialdehyde/malonate-semialdehyde dehydrogenase [acylating], mitochondrial (537 aa).

The N-terminal 34 residues, 1 to 34 (MAAVAVAAAAAALRARILQVSSKVNSSWQPASSF), are a transit peptide targeting the mitochondrion. N6-acetyllysine; alternate occurs at positions 49, 54, 57, and 78. Lys-49, Lys-54, Lys-57, and Lys-78 each carry N6-succinyllysine; alternate. Lys-89 is subject to N6-acetyllysine. N6-acetyllysine; alternate is present on residues Lys-119 and Lys-131. Lys-119 and Lys-131 each carry N6-succinyllysine; alternate. 6 residues coordinate NAD(+): Ala-185, Phe-187, Lys-211, Glu-214, Arg-215, and Ser-264. Ser-264 is modified (phosphoserine). An N6-acetyllysine modification is found at Lys-300. Cys-319 serves as the catalytic Nucleophile. Residues Lys-332 and Lys-333 each carry the N6-acetyllysine modification. Residues Lys-366 and Lys-378 each carry the N6-acetyllysine; alternate modification. N6-succinyllysine; alternate is present on residues Lys-366 and Lys-378. Ser-382 carries the phosphoserine modification. Lys-393 is modified (N6-succinyllysine). Glu-419 contacts NAD(+). Lys-502 bears the N6-acetyllysine mark. Residue Lys-519 is modified to N6-succinyllysine.

The protein belongs to the aldehyde dehydrogenase family. In terms of assembly, homodimer. In terms of processing, the N-terminus is blocked.

The protein localises to the mitochondrion. It carries out the reaction 2-methyl-3-oxopropanoate + NAD(+) + CoA + H2O = propanoyl-CoA + hydrogencarbonate + NADH + H(+). The catalysed reaction is 3-oxopropanoate + NAD(+) + CoA + H2O = hydrogencarbonate + acetyl-CoA + NADH + H(+). The enzyme catalyses (R)-2-methyl-3-oxopropanoate + NAD(+) + CoA + H2O = propanoyl-CoA + hydrogencarbonate + NADH + H(+). It catalyses the reaction (S)-2-methyl-3-oxopropanoate + NAD(+) + CoA + H2O = propanoyl-CoA + hydrogencarbonate + NADH + H(+). Malonate and methylmalonate semialdehyde dehydrogenase involved in the catabolism of valine, thymine, and compounds catabolized by way of beta-alanine, including uracil and cytidine. This chain is Methylmalonate-semialdehyde/malonate-semialdehyde dehydrogenase [acylating], mitochondrial (ALDH6A1), found in Bos taurus (Bovine).